Consider the following 185-residue polypeptide: CASP-like protein 2C3 (185 aa).

The Cytoplasmic portion of the chain corresponds to 1-13 (MAAAARVSEVKAE). The chain crosses the membrane as a helical span at residues 14–34 (GLLRGACAALAAAAALLVGLS). Residues 35–53 (TQTETVLLVRKKATVKDVQ) lie on the Extracellular side of the membrane. The chain crosses the membrane as a helical span at residues 54–74 (ALWVLAMAAAAAAGYHLLQLL). At 75-104 (KCLYLGRVGGARPCRRSSRALAWTCLLLDK) the chain is on the cytoplasmic side. Residues 105-125 (ACAYTTFATTVAAAQACVVAL) form a helical membrane-spanning segment. The Extracellular portion of the chain corresponds to 126–146 (DGAHAVQWTKLCNIYTRFCEQ). The helical transmembrane segment at 147–167 (VAGSLVLGMLAAVGTAVLSAA) threads the bilayer. Residues 168–185 (SARNVFRHYSSLETYAAH) are Cytoplasmic-facing.

Belongs to the Casparian strip membrane proteins (CASP) family. In terms of assembly, homodimer and heterodimers.

Its subcellular location is the cell membrane. This is CASP-like protein 2C3 from Zea mays (Maize).